The chain runs to 431 residues: Adenosylhomocysteinase (431 aa).

Substrate contacts are provided by Thr-56, Asp-131, and Glu-156. An NAD(+)-binding site is contributed by 157–159 (TTT). Substrate-binding residues include Lys-186 and Asp-190. NAD(+)-binding positions include Asn-191, 222–227 (GDVGKG), Glu-243, 299–301 (IGH), and Asn-345.

It belongs to the adenosylhomocysteinase family. As to quaternary structure, homotetramer. The cofactor is NAD(+).

The enzyme catalyses S-adenosyl-L-homocysteine + H2O = L-homocysteine + adenosine. It participates in amino-acid biosynthesis; L-homocysteine biosynthesis; L-homocysteine from S-adenosyl-L-homocysteine: step 1/1. Adenosylhomocysteine is a competitive inhibitor of S-adenosyl-L-methionine-dependent methyl transferase reactions; therefore adenosylhomocysteinase may play a key role in the control of methylations via regulation of the intracellular concentration of adenosylhomocysteine. In Dictyostelium discoideum (Social amoeba), this protein is Adenosylhomocysteinase (sahA).